Reading from the N-terminus, the 243-residue chain is Ubiquinone biosynthesis O-methyltransferase (243 aa).

Positions 44, 64, 85, and 129 each coordinate S-adenosyl-L-methionine.

This sequence belongs to the methyltransferase superfamily. UbiG/COQ3 family.

The enzyme catalyses a 3-demethylubiquinol + S-adenosyl-L-methionine = a ubiquinol + S-adenosyl-L-homocysteine + H(+). The catalysed reaction is a 3-(all-trans-polyprenyl)benzene-1,2-diol + S-adenosyl-L-methionine = a 2-methoxy-6-(all-trans-polyprenyl)phenol + S-adenosyl-L-homocysteine + H(+). The protein operates within cofactor biosynthesis; ubiquinone biosynthesis. Its function is as follows. O-methyltransferase that catalyzes the 2 O-methylation steps in the ubiquinone biosynthetic pathway. In Erwinia tasmaniensis (strain DSM 17950 / CFBP 7177 / CIP 109463 / NCPPB 4357 / Et1/99), this protein is Ubiquinone biosynthesis O-methyltransferase.